Reading from the N-terminus, the 749-residue chain is Disintegrin and metalloproteinase domain-containing protein 10 (749 aa).

The signal sequence occupies residues 1-19; it reads MVLPTVLILLLSWAAGLGG. Residues 20 to 214 constitute a propeptide that is removed on maturation; the sequence is QYGNPLNKYI…SGPELLRKKR (195 aa). The Extracellular portion of the chain corresponds to 20–673; the sequence is QYGNPLNKYI…SPQLYENIAE (654 aa). A Cysteine switch motif is present at residues 171 to 178; sequence GGCADHSV. Cysteine 173 contributes to the Zn(2+) binding site. Positions 221-457 constitute a Peptidase M12B domain; it reads NTCQLYIQTD…KRNNCFVESG (237 aa). 17 cysteine pairs are disulfide-bonded: cysteine 223–cysteine 314, cysteine 345–cysteine 452, cysteine 400–cysteine 436, cysteine 461–cysteine 496, cysteine 472–cysteine 485, cysteine 474–cysteine 480, cysteine 484–cysteine 516, cysteine 504–cysteine 512, cysteine 511–cysteine 537, cysteine 525–cysteine 544, cysteine 531–cysteine 563, cysteine 556–cysteine 568, cysteine 573–cysteine 599, cysteine 581–cysteine 608, cysteine 583–cysteine 598, cysteine 595–cysteine 640, and cysteine 633–cysteine 646. N-linked (GlcNAc...) asparagine glycans are attached at residues asparagine 268 and asparagine 279. Histidine 384 is a Zn(2+) binding site. Residue glutamate 385 is part of the active site. Zn(2+) is bound by residues histidine 388 and histidine 394. N-linked (GlcNAc...) asparagine glycosylation is present at asparagine 440. In terms of domain architecture, Disintegrin spans 458 to 552; the sequence is QPICGNGMVE…LCPASDPKPN (95 aa). Residue asparagine 552 is glycosylated (N-linked (GlcNAc...) asparagine). A helical transmembrane segment spans residues 674–694; it reads WIVAHWWAVLLMGIALIMLMA. The Cytoplasmic segment spans residues 695 to 749; it reads GFIKICSVHTPSSNPKLPPPKPLPGTLKRRRPPQPIQQPPRQRPRESYQMGHMRR. The interval 705 to 749 is disordered; that stretch reads PSSNPKLPPPKPLPGTLKRRRPPQPIQQPPRQRPRESYQMGHMRR. Residues 709–716 carry the SH3-binding motif; sequence PKLPPPKP. A Phosphothreonine modification is found at threonine 720. Positions 723–729 match the SH3-binding motif; sequence RRRPPQP. Residues 735–749 are interaction with AP2A1, AP2A2 and AP2M1; the sequence is RQRPRESYQMGHMRR.

As to quaternary structure, forms a ternary EFNA5-EPHA3-ADAM10 complex mediating EFNA5 extracellular domain shedding by ADAM10 which regulates the EFNA5-EPHA3 complex internalization and function, the cleavage occurs in trans, with ADAM10 and its substrate being on the membranes of opposing cells. Interacts with the clathrin adapter AP2 complex subunits AP2A1, AP2A2, AP2B1, and AP2M1; this interaction facilitates ADAM10 endocytosis from the plasma membrane during long-term potentiation in hippocampal neurons. Forms a ternary complex composed of ADAM10, EPHA4 and CADH1; within the complex, ADAM10 cleaves CADH1 which disrupts adherens junctions. Interacts with EPHA2. Interacts with NGF in a divalent cation-dependent manner. Interacts with TSPAN14; the interaction promotes ADAM10 maturation and cell surface expression. Interacts with TSPAN5, TSPAN10, TSPAN14, TSPAN15, TSPAN17 and TSPAN33; these interactions regulate ADAM10 substrate specificity, endocytosis and turnover. Interacts (via extracellular domain) with TSPAN33 (via extracellular domain) and (via cytoplasmic domain) with AFDN; interaction with TSPAN33 allows the docking of ADAM10 to zonula adherens through a PDZ11-dependent interaction between TSPAN33 and PLEKHA7 while interaction with AFDN locks ADAM10 at zonula adherens. Interacts with DLG1; this interaction recruits ADAM10 to the cell membrane during long-term depression in hippocampal neurons. Interacts (via extracellular domain) with BACE1 (via extracellular domain). Interacts with FAM171A1. It depends on Zn(2+) as a cofactor. Post-translationally, the precursor is cleaved by furin and PCSK7. Expressed in the brain, specifically in neurons and astrocytes (at protein level). Expressed in inner and outer pillar cells of the organ of Corti (at protein level). Expressed in kidney and lung.

The protein localises to the cell membrane. It is found in the golgi apparatus membrane. It localises to the cytoplasmic vesicle. Its subcellular location is the clathrin-coated vesicle. The protein resides in the cell projection. The protein localises to the axon. It is found in the dendrite. It localises to the cell junction. Its subcellular location is the adherens junction. The protein resides in the cytoplasm. The enzyme catalyses Endopeptidase of broad specificity.. Its activity is regulated as follows. Catalytically inactive when the propeptide is intact and associated with the mature enzyme. The disintegrin and cysteine-rich regions modulate access of substrates to exerts an inhibitory effect on the cleavage of ADAM10 substrates. Transmembrane metalloprotease which mediates the ectodomain shedding of a myriad of transmembrane proteins, including adhesion proteins, growth factor precursors and cytokines being essential for development and tissue homeostasis. Associates with six members of the tetraspanin superfamily TspanC8 which regulate its exit from the endoplasmic reticulum and its substrate selectivity. Cleaves the membrane-bound precursor of TNF-alpha to its mature soluble form. Responsible for the proteolytical release of soluble JAM3 from endothelial cells surface. Responsible for the proteolytic release of several other cell-surface proteins, including heparin-binding epidermal growth-like factor, ephrin-A2, CD44, CDH2 and for constitutive and regulated alpha-secretase cleavage of amyloid precursor protein (APP) at '687-Lys-|-Leu-688'. Contributes to the normal cleavage of the cellular prion protein. Involved in the cleavage of the adhesion molecule L1 at the cell surface and in released membrane vesicles, suggesting a vesicle-based protease activity. Also controls the proteolytic processing of Notch and mediates lateral inhibition during neurogenesis. Required for the development of type 1 transitional B cells into marginal zone B cells, probably by cleaving Notch. Responsible for the FasL ectodomain shedding and for the generation of the remnant ADAM10-processed FasL (FasL APL) transmembrane form. Also cleaves the ectodomain of the integral membrane proteins CORIN and ITM2B. Mediates the proteolytic cleavage of LAG3, leading to release the secreted form of LAG3. Mediates the proteolytic cleavage of IL6R and IL11RA, leading to the release of secreted forms of IL6R and IL11RA. Enhances the cleavage of CHL1 by BACE1. Cleaves NRCAM. Cleaves TREM2, resulting in shedding of the TREM2 ectodomain. Involved in the development and maturation of glomerular and coronary vasculature. During development of the cochlear organ of Corti, promotes pillar cell separation by forming a ternary complex with CADH1 and EPHA4 and cleaving CADH1 at adherens junctions. May regulate the EFNA5-EPHA3 signaling. This is Disintegrin and metalloproteinase domain-containing protein 10 (Adam10) from Mus musculus (Mouse).